The sequence spans 385 residues: Chaperone protein DnaJ 2 (385 aa).

The J domain maps to 10-75 (DYYKELGVSS…AKRKEYDETR (66 aa)). The CR-type zinc-finger motif lies at 155–233 (GVTVPLRMTS…CHGSGIQNRT (79 aa)). Residues C168, C171, C185, C188, C207, C210, C221, and C224 each coordinate Zn(2+). CXXCXGXG motif repeat units follow at residues 168–175 (CTTCHGSG), 185–192 (CPICNGTG), 207–214 (CDGCRGTG), and 221–228 (CVDCHGSG).

Belongs to the DnaJ family. As to quaternary structure, homodimer. Zn(2+) is required as a cofactor.

It is found in the cytoplasm. Participates actively in the response to hyperosmotic and heat shock by preventing the aggregation of stress-denatured proteins and by disaggregating proteins, also in an autonomous, DnaK-independent fashion. Unfolded proteins bind initially to DnaJ; upon interaction with the DnaJ-bound protein, DnaK hydrolyzes its bound ATP, resulting in the formation of a stable complex. GrpE releases ADP from DnaK; ATP binding to DnaK triggers the release of the substrate protein, thus completing the reaction cycle. Several rounds of ATP-dependent interactions between DnaJ, DnaK and GrpE are required for fully efficient folding. Also involved, together with DnaK and GrpE, in the DNA replication of plasmids through activation of initiation proteins. This Nocardia farcinica (strain IFM 10152) protein is Chaperone protein DnaJ 2.